We begin with the raw amino-acid sequence, 296 residues long: ATP synthase gamma chain (296 aa).

This sequence belongs to the ATPase gamma chain family. In terms of assembly, F-type ATPases have 2 components, CF(1) - the catalytic core - and CF(0) - the membrane proton channel. CF(1) has five subunits: alpha(3), beta(3), gamma(1), delta(1), epsilon(1). CF(0) has three main subunits: a, b and c.

The protein localises to the cell membrane. Its function is as follows. Produces ATP from ADP in the presence of a proton gradient across the membrane. The gamma chain is believed to be important in regulating ATPase activity and the flow of protons through the CF(0) complex. The chain is ATP synthase gamma chain from Pseudarthrobacter chlorophenolicus (strain ATCC 700700 / DSM 12829 / CIP 107037 / JCM 12360 / KCTC 9906 / NCIMB 13794 / A6) (Arthrobacter chlorophenolicus).